The sequence spans 165 residues: Nucleotide-binding protein CHY_1197 (165 aa).

The protein belongs to the YajQ family.

In terms of biological role, nucleotide-binding protein. This Carboxydothermus hydrogenoformans (strain ATCC BAA-161 / DSM 6008 / Z-2901) protein is Nucleotide-binding protein CHY_1197.